A 259-amino-acid polypeptide reads, in one-letter code: 3'-5' ssDNA/RNA exonuclease TatD (259 aa).

Glu92, His128, and His153 together coordinate a divalent metal cation.

It belongs to the metallo-dependent hydrolases superfamily. TatD-type hydrolase family. TatD subfamily. As to quaternary structure, monomer. Mg(2+) serves as cofactor.

It localises to the cytoplasm. In terms of biological role, 3'-5' exonuclease that prefers single-stranded DNA and RNA. May play a role in the H(2)O(2)-induced DNA damage repair. This chain is 3'-5' ssDNA/RNA exonuclease TatD, found in Erwinia tasmaniensis (strain DSM 17950 / CFBP 7177 / CIP 109463 / NCPPB 4357 / Et1/99).